A 582-amino-acid chain; its full sequence is Proline--tRNA ligase (582 aa).

The protein belongs to the class-II aminoacyl-tRNA synthetase family. ProS type 1 subfamily. Homodimer.

It localises to the cytoplasm. The catalysed reaction is tRNA(Pro) + L-proline + ATP = L-prolyl-tRNA(Pro) + AMP + diphosphate. Catalyzes the attachment of proline to tRNA(Pro) in a two-step reaction: proline is first activated by ATP to form Pro-AMP and then transferred to the acceptor end of tRNA(Pro). As ProRS can inadvertently accommodate and process non-cognate amino acids such as alanine and cysteine, to avoid such errors it has two additional distinct editing activities against alanine. One activity is designated as 'pretransfer' editing and involves the tRNA(Pro)-independent hydrolysis of activated Ala-AMP. The other activity is designated 'posttransfer' editing and involves deacylation of mischarged Ala-tRNA(Pro). The misacylated Cys-tRNA(Pro) is not edited by ProRS. This Mycobacterium tuberculosis (strain CDC 1551 / Oshkosh) protein is Proline--tRNA ligase.